We begin with the raw amino-acid sequence, 582 residues long: Zinc finger protein 319 (582 aa).

Over residues 1-14 (MSESWQQPPQTQPQ) the composition is skewed to low complexity. Residues 1–39 (MSESWQQPPQTQPQQPQPPQPQHHAEPPPALAEHTLPPG) form a disordered region. Residues 76–100 (PKCGVCGHDLAHLSSPHEHQCLAGH) form a C2H2-type 1 zinc finger. The C2H2-type 2; degenerate zinc finger occupies 104–126 (FQCTQCLKIFHQATDLLEHQCVQ). Lysine 130 is covalently cross-linked (Glycyl lysine isopeptide (Lys-Gly) (interchain with G-Cter in SUMO2)). The segment at 132 to 154 (FVCGVCKMGFSLLTSLAQHHSSH) adopts a C2H2-type 3 zinc-finger fold. Low complexity predominate over residues 174–196 (EPATTAAPSLPAAPAPSTVTPAE). The disordered stretch occupies residues 174 to 198 (EPATTAAPSLPAAPAPSTVTPAEQA). C2H2-type zinc fingers lie at residues 202-224 (YSCP…ERIH), 230-252 (YKCT…KRTH), and 258-280 (YKCA…MYAH). Residue serine 281 is modified to Phosphoserine. The segment at 287 to 309 (FRCNVCELHFKESSELLQHPCTP) adopts a C2H2-type 7; degenerate zinc-finger fold. C2H2-type zinc fingers lie at residues 315–337 (FRCG…ERTH), 343–365 (FKCD…RRTH), and 371–393 (FKCG…QHVH). The C2H2-type 11; degenerate zinc finger occupies 399–421 (FKCPVCQKGFDQSAELLRHKCLP). The segment at 428–450 (FKCPVCNKAYKRASALQKHQLAH) adopts a C2H2-type 12 zinc-finger fold. The segment at 458–480 (LRCTLCERRFFSSSEFVQHRCDP) adopts a C2H2-type 13; degenerate zinc-finger fold. 3 consecutive C2H2-type zinc fingers follow at residues 486–508 (LKCP…RRVH), 514–536 (YKCP…QGVH), and 542–564 (FKCV…SAQH).

It belongs to the krueppel C2H2-type zinc-finger protein family.

It localises to the nucleus. In terms of biological role, may be involved in transcriptional regulation. The chain is Zinc finger protein 319 (ZNF319) from Homo sapiens (Human).